Reading from the N-terminus, the 486-residue chain is Achaete-scute complex protein T8 (486 aa).

Disordered regions lie at residues Met-1–Thr-26 and Ala-75–Pro-158. The span at Ala-75–Ser-86 shows a compositional bias: polar residues. Residues Gln-159–Leu-223 enclose the bHLH domain.

In terms of assembly, efficient DNA binding requires dimerization with another bHLH protein. As to expression, l(1)SC, SC and AC strongly label the presumptive stomatogastric nervous system, while ASE is more prominent in the presumptive procephalic lobe.

Functionally, involved in the determination of the neuronal precursors of optic lobes in the central nervous system. In Drosophila melanogaster (Fruit fly), this protein is Achaete-scute complex protein T8 (ase).